The following is a 194-amino-acid chain: Holliday junction branch migration complex subunit RuvA (194 aa).

The interval 1–64 (MISRLTGKLV…EDAHLLFGFA (64 aa)) is domain I. The domain II stretch occupies residues 65-143 (TAEERKTFRQ…AHTVTDGLFA (79 aa)). The segment at 144–147 (AAPA) is flexible linker. Positions 147 to 194 (AADETEDIVSTLLALGYSEREAKAAVKGVPEGTDVGEGVRLALKNLLK) are domain III.

The protein belongs to the RuvA family. Homotetramer. Forms an RuvA(8)-RuvB(12)-Holliday junction (HJ) complex. HJ DNA is sandwiched between 2 RuvA tetramers; dsDNA enters through RuvA and exits via RuvB. An RuvB hexamer assembles on each DNA strand where it exits the tetramer. Each RuvB hexamer is contacted by two RuvA subunits (via domain III) on 2 adjacent RuvB subunits; this complex drives branch migration. In the full resolvosome a probable DNA-RuvA(4)-RuvB(12)-RuvC(2) complex forms which resolves the HJ.

The protein localises to the cytoplasm. Its function is as follows. The RuvA-RuvB-RuvC complex processes Holliday junction (HJ) DNA during genetic recombination and DNA repair, while the RuvA-RuvB complex plays an important role in the rescue of blocked DNA replication forks via replication fork reversal (RFR). RuvA specifically binds to HJ cruciform DNA, conferring on it an open structure. The RuvB hexamer acts as an ATP-dependent pump, pulling dsDNA into and through the RuvAB complex. HJ branch migration allows RuvC to scan DNA until it finds its consensus sequence, where it cleaves and resolves the cruciform DNA. The sequence is that of Holliday junction branch migration complex subunit RuvA from Neisseria meningitidis serogroup C (strain 053442).